The sequence spans 427 residues: BSD domain-containing protein 1 (427 aa).

S92 and S166 each carry phosphoserine. The BSD domain occupies 146–198 (WLSEFCLEEKKGEISELLVGSPSIRALYTKMVPAAVSHSEFWHRYFYKVHQLE). The interval 208-397 (KQRADQSISE…ISEDWEKDFD (190 aa)) is disordered. The segment covering 219–229 (PGWEEEEEELE) has biased composition (acidic residues). Positions 236-245 (KEAKIPKETK) are enriched in basic and acidic residues. Residues 268-279 (PAEATPSESSES) show a composition bias toward low complexity. Residues 324 to 333 (GPPPPPPSKP) show a composition bias toward pro residues. Positions 347–364 (PPARVETLREEVPTDLRV) are enriched in basic and acidic residues. Residue T353 is modified to Phosphothreonine. Polar residues predominate over residues 368–387 (NSDSGKSTPSNNGKKGSSTD). Phosphoserine is present on residues S384 and S385. The span at 388-397 (ISEDWEKDFD) shows a compositional bias: acidic residues. Residue S415 is modified to Phosphoserine.

The sequence is that of BSD domain-containing protein 1 (Bsdc1) from Mus musculus (Mouse).